A 510-amino-acid polypeptide reads, in one-letter code: Probable cytosol aminopeptidase (510 aa).

Mn(2+) is bound by residues Lys282 and Asp287. The active site involves Lys294. Positions 305, 364, and 366 each coordinate Mn(2+). The active site involves Arg368.

Belongs to the peptidase M17 family. Requires Mn(2+) as cofactor.

It localises to the cytoplasm. The enzyme catalyses Release of an N-terminal amino acid, Xaa-|-Yaa-, in which Xaa is preferably Leu, but may be other amino acids including Pro although not Arg or Lys, and Yaa may be Pro. Amino acid amides and methyl esters are also readily hydrolyzed, but rates on arylamides are exceedingly low.. It carries out the reaction Release of an N-terminal amino acid, preferentially leucine, but not glutamic or aspartic acids.. Functionally, presumably involved in the processing and regular turnover of intracellular proteins. Catalyzes the removal of unsubstituted N-terminal amino acids from various peptides. The sequence is that of Probable cytosol aminopeptidase from Cupriavidus pinatubonensis (strain JMP 134 / LMG 1197) (Cupriavidus necator (strain JMP 134)).